The sequence spans 244 residues: tRNA (guanine-N(1)-)-methyltransferase (244 aa).

S-adenosyl-L-methionine is bound by residues Gly123 and 143-148; that span reads LGDFVM.

It belongs to the RNA methyltransferase TrmD family. Homodimer.

It is found in the cytoplasm. It catalyses the reaction guanosine(37) in tRNA + S-adenosyl-L-methionine = N(1)-methylguanosine(37) in tRNA + S-adenosyl-L-homocysteine + H(+). Functionally, specifically methylates guanosine-37 in various tRNAs. This chain is tRNA (guanine-N(1)-)-methyltransferase, found in Ruegeria sp. (strain TM1040) (Silicibacter sp.).